Consider the following 607-residue polypeptide: (R)-limonene synthase 1, chloroplastic (607 aa).

A chloroplast-targeting transit peptide spans 1–52; it reads MSSCINPSTLATSVNGFKCLPLATNRAAIRIMAKNKPVQCLVSTKYDNLTVD. Mn(2+) is bound by residues Asp343 and Asp347. Residues Asp343, Asp347, Arg485, Asp488, and Lys504 each contribute to the substrate site. The DDXXD motif signature appears at 343–347; that stretch reads DDIYD. Asp488 is a Mn(2+) binding site.

The protein belongs to the terpene synthase family. Requires Mg(2+) as cofactor. It depends on Mn(2+) as a cofactor.

It localises to the plastid. Its subcellular location is the chloroplast. The enzyme catalyses (2E)-geranyl diphosphate = (4R)-limonene + diphosphate. Its activity is regulated as follows. Inhibited by 2-fluorogeranyl diphosphate (FGPP) and 2-fluoroneryl diphosphate (FNPP). Its function is as follows. Catalyzes the conversion of geranyl diphosphate to (+)-(4R)-limonene. Produces exclusively the (+)-enantiomer. Can use neryl diphosphate as substrate. Has no activity with farnesyl diphosphate. In Citrus sinensis (Sweet orange), this protein is (R)-limonene synthase 1, chloroplastic.